The following is a 120-amino-acid chain: NAD(P)H-quinone oxidoreductase subunit 3 (120 aa).

3 helical membrane passes run 10 to 30 (FLGF…TNLI), 64 to 84 (MFAL…PWAV), and 89 to 109 (LGLL…IALA).

The protein belongs to the complex I subunit 3 family. NDH-1 can be composed of about 15 different subunits; different subcomplexes with different compositions have been identified which probably have different functions.

It is found in the cellular thylakoid membrane. The enzyme catalyses a plastoquinone + NADH + (n+1) H(+)(in) = a plastoquinol + NAD(+) + n H(+)(out). It carries out the reaction a plastoquinone + NADPH + (n+1) H(+)(in) = a plastoquinol + NADP(+) + n H(+)(out). In terms of biological role, NDH-1 shuttles electrons from an unknown electron donor, via FMN and iron-sulfur (Fe-S) centers, to quinones in the respiratory and/or the photosynthetic chain. The immediate electron acceptor for the enzyme in this species is believed to be plastoquinone. Couples the redox reaction to proton translocation, and thus conserves the redox energy in a proton gradient. Cyanobacterial NDH-1 also plays a role in inorganic carbon-concentration. This chain is NAD(P)H-quinone oxidoreductase subunit 3, found in Prochlorococcus marinus (strain AS9601).